Consider the following 240-residue polypeptide: Aquaporin Z (240 aa).

2 helical membrane passes run 10–30 (AIGTFWLTFAGCGSAVIAAGF) and 35–55 (IGLVGVSLAFGLSVVTMAYAI). Residues 64–66 (NPA) carry the NPA 1 motif. 3 consecutive transmembrane segments (helical) span residues 82–102 (ILPYVIAQVCGAIVAAELLYI), 131–151 (MMACFLTEVVMTMMFLFIIMG), and 160–180 (GFAPLAIGLALVMIHLVSIPV). The NPA 2 signature appears at 186 to 188 (NPA). The helical transmembrane segment at 194 to 214 (ALFVGGWAMAQLWLFWVAPLI) threads the bilayer.

This sequence belongs to the MIP/aquaporin (TC 1.A.8) family. As to quaternary structure, homotetramer.

It is found in the cell inner membrane. The catalysed reaction is H2O(in) = H2O(out). Functionally, channel that permits osmotically driven movement of water in both directions. It is involved in the osmoregulation and in the maintenance of cell turgor during volume expansion in rapidly growing cells. It mediates rapid entry or exit of water in response to abrupt changes in osmolarity. This chain is Aquaporin Z, found in Bradyrhizobium diazoefficiens (strain JCM 10833 / BCRC 13528 / IAM 13628 / NBRC 14792 / USDA 110).